The chain runs to 860 residues: MQEQYRPEEIESKVQLHWDEKRTFEVTEDESKEKYYCLSMLPYPSGRLHMGHVRNYTIGDVVARYQRMLGKNVLQPIGWDAFGLPAEGAAVKNNTAPAPWTYDNIAYMKNQLKTLGFGYDWSREIATCTPEYYRWEQKFFTELYKKGLVYKKTSAVNWCPNDQTVLANEQVIDGCCWRCDTKVERKEIPQWFIKITAYADELLRDLDKLDHWPDTVKTMQRNWIGRSEGVEITFDVKGYDNTLIVYTTRPDTFMGATYLAVAAGHPLAQKAAANNAELAAFVDECRNTKVAEAEMATMEKKGVDTGYKAIHPLTGEEIPVWAANFVLMEYGTGAVMAVPGHDQRDYEFASKYGLTIKPVILAADGSEPDLSEQALTEKGVLFNSGEFDGLAFEAAFNAIADKLAEKGVGERKVNYRLRDWGVSRQRYWGAPIPMITQEDGTVLPTPEDQLPVILPEDVVMDGITSPIKADPEWAKTTVNGMPALRETDTFDTFMESSWYYARYTCPQYQEGMLDSKAANYWLPVDIYIGGIEHAIMHLLYFRFFHKLMRDAGMVTSDEPAKQLLCQGMVLADAFYYVGENGERNWVSPVDAIVERDEKGRIVKAKDAAGHELVYTGMSKMSKSKNNGIDPQVMVERYGADTVRLFMMFASPADMTLEWQESGVEGANRFIKRVWKLVYEHTAKGPVAALNVDALSEDQKALRRDVHKTIAKVTDDIGRRQTFNTAIAAIMELMNKLAKAPQEGEQDRALLQEALQAVVRMLNPFTPHVCFTLWQELGGEGDIDNAPWPVADEQAMVENTTLVVVQVNGKVRGKITVAVDATEEQVRERAGQEHLVAKYLDGVTVRKVIYVPGKLLNLVVG.

Positions 42–52 match the 'HIGH' region motif; that stretch reads PYPSGRLHMGH. The 'KMSKS' region signature appears at 619-623; the sequence is KMSKS. K622 contributes to the ATP binding site.

It belongs to the class-I aminoacyl-tRNA synthetase family.

It localises to the cytoplasm. The catalysed reaction is tRNA(Leu) + L-leucine + ATP = L-leucyl-tRNA(Leu) + AMP + diphosphate. This Salmonella paratyphi A (strain ATCC 9150 / SARB42) protein is Leucine--tRNA ligase.